Consider the following 256-residue polypeptide: MFGNTTISKMLLDYGARIDSRNKEECLPLNHAIATNNKELTSLFLARGADTNIVDKYNRSVLHKAIGNNNITSVKLLLNHGIDYNLRDNHGYTALHYAITLQNREITDMLLSSGADPNIMNNEKHTPLYHALLYRSSNVESLILHGADINIVDDTGKTPLSNTYIDIIDNKNIEVIVSQFTILEYIAPDDIKNQLGYKINTDLINNNKRYSTIKQKCVHEINLLKAIKFHSGYSAEIFLIKSKSNIFHNSQGIQIL.

ANK repeat units follow at residues 1-20 (MFGN…RIDS), 24-53 (EECL…DTNI), 57-86 (YNRS…DYNL), 90-119 (HGYT…DPNI), and 123-151 (EKHT…DINI).

The sequence is that of Putative ankyrin repeat protein FPV231 from Vertebrata (FPV).